The sequence spans 308 residues: N-acetylmuramic acid 6-phosphate etherase (308 aa).

Positions 59–222 constitute an SIS domain; that stretch reads TAERLRHGGR…STGVMVKLGK (164 aa). Glu87 acts as the Proton donor in catalysis. Glu118 is a catalytic residue.

It belongs to the GCKR-like family. MurNAc-6-P etherase subfamily. As to quaternary structure, homodimer.

It carries out the reaction N-acetyl-D-muramate 6-phosphate + H2O = N-acetyl-D-glucosamine 6-phosphate + (R)-lactate. It participates in amino-sugar metabolism; N-acetylmuramate degradation. Functionally, specifically catalyzes the cleavage of the D-lactyl ether substituent of MurNAc 6-phosphate, producing GlcNAc 6-phosphate and D-lactate. This is N-acetylmuramic acid 6-phosphate etherase from Nostoc punctiforme (strain ATCC 29133 / PCC 73102).